Reading from the N-terminus, the 872-residue chain is Leucine--tRNA ligase (872 aa).

A 'HIGH' region motif is present at residues 42–52 (PYPSGKLHMGH). Residues 632-636 (KMSKS) carry the 'KMSKS' region motif. Residue Lys635 participates in ATP binding.

This sequence belongs to the class-I aminoacyl-tRNA synthetase family.

The protein localises to the cytoplasm. It carries out the reaction tRNA(Leu) + L-leucine + ATP = L-leucyl-tRNA(Leu) + AMP + diphosphate. This Chromobacterium violaceum (strain ATCC 12472 / DSM 30191 / JCM 1249 / CCUG 213 / NBRC 12614 / NCIMB 9131 / NCTC 9757 / MK) protein is Leucine--tRNA ligase.